The chain runs to 745 residues: MASVLGSGRGSGGLSSQLKCKSKRRRRRRSKRKDKVSILSTFLAPFKYLSPGTTNTEDEDNLSTSSAEVKENRNVSNLGTRPLPPGDWARGSTPSVKRKRPLEEGNGGHFCKLQLIWKKLSWSVTPKNALVQLHELKPGLQYRMVSQTGPVHAPVFAVAVEVNGLTFEGTGPTKKKAKMRAAEMALKSFVQFPNAFQAHLAMGSSTSPCTDFTSDQADFPDTLFKEFEPSSKNEDFPGCHPVDTEFLSSAYRRGRLLYHTLDLMGQALPDRSRLAPGALGERNPVVVLNELRSGLRYVCLSETAEKPRVKSFVMAVCVDGRTFEGSGRSKKLAKGQAAQAALQALFDIRLPGHIPSRSKSNLLPQDFADSVSQLVTQKFRELTVGLTSVYARHKTLAGIVMTKGLDTKQAQVIVLSSGTKCISGEHISDQGLVVNDCHAEIVARRAFLHFLYSQLELHLSKHQEDPERSIFIRLKEGGYRLRENILFHLYVSTSPCGDARVNSPYEITTDLNSSKHIVRKFRGHLRTKIESGEGTVPVRGPSAVQTWDGILLGEQLITMSCTDKIASWNVLGLQGALLCHFIEPVYLHSIIVGSLHHTGHLARVMSHRMEGIGQLPASYRQNRPLLSGVSHAEARQPGKSPHFSANWVVGSADLEIINATTGKRSCGGSSRLCKHVFSAWWARLHGRLSTRIPSHGDTPSMYCEAKQGAHTYQSVKQQLFKAFQKAGLGTWVRKPPEQDQFLLSL.

Disordered regions lie at residues 1-35 (MASV…RKDK) and 50-104 (SPGT…PLEE). Positions 20 to 34 (CKSKRRRRRRSKRKD) are enriched in basic residues. Residues 23–35 (KRRRRRRSKRKDK) form an R-domain (ssRNA-binding) region. 2 consecutive DRBM domains span residues 125-191 (TPKN…SFVQ) and 283-347 (NPVV…ALFD). Residues 414-741 (VLSSGTKCIS…VRKPPEQDQF (328 aa)) form the A to I editase domain. His-438 contributes to the Zn(2+) binding site. Glu-440 functions as the Proton donor in the catalytic mechanism. The Zn(2+) site is built by Cys-496 and Cys-561.

In terms of tissue distribution, brain specific.

The protein localises to the nucleus. Functionally, lacks editing activity. It prevents the binding of other ADAR enzymes to targets in vitro, and decreases the efficiency of these enzymes. Capable of binding to dsRNA but also to ssRNA. The protein is Double-stranded RNA-specific editase B2 (Adarb2) of Mus musculus (Mouse).